The chain runs to 628 residues: MSEKKYTFETEVDKLLHLVIHSLYSNREIFLRELVSNSSDAIEKLRYESISNAALNEDDTDYAIRIDFDKDAKTITVSDNGIGMTEEEVIENLGTIAKSGTKKFLESLTGDKSKDNELIGQFGVGFYSSFIVADKVTVRTRKAGQDKSQATKWVSDAQNGFTVEIITKEKRGTEVILHIKKEHLDLLEYHVLKGLVNKYSDCINTPIQMKKVEYDKDGKQTVKDEYETVNNTKAIWLRSKGEVTNEEYQEFYKYISHDFADALMWIHNKVEGNLEYNSLLYIPQNKPFDFWNRDKDYGLSLYVRRVFIMENKELLPPYLRFVKGVIDSADLPLNVSREILQHNKVIDKIKKAITTKILSELKKLASKDKEKYQKFWDSFGQVLKEGVSDDYSNKEKIAGLLRFATTQSGDSKQTVSLADYISRMKESQDTIYYITSDSYKAAANNPQLEAFKKKGIEVILMTDRIDEWMMSTLTEFDDKHMKSIIKGDIDLDKFETPENKEKFEKEAKDFEKVLKEIKEVLKDKVEDVRLSKRLTDSPSCVVVNDYGMSLHMQKMMEEAGQSFMPGMGMKPILELNAEHNLVQKLKNEADTEIFADLSELLLLQAMFVEGAKIEDPMAFVKLVNKYIR.

The a; substrate-binding stretch occupies residues 1-337 (MSEKKYTFET…SADLPLNVSR (337 aa)). The interval 338-554 (EILQHNKVID…DYGMSLHMQK (217 aa)) is b. Residues 555-628 (MMEEAGQSFM…FVKLVNKYIR (74 aa)) are c.

Belongs to the heat shock protein 90 family. In terms of assembly, homodimer.

The protein resides in the cytoplasm. Molecular chaperone. Has ATPase activity. This chain is Chaperone protein HtpG, found in Francisella tularensis subsp. holarctica (strain FTNF002-00 / FTA).